We begin with the raw amino-acid sequence, 350 residues long: Putative D-xylulose reductase (350 aa).

Zn(2+) is bound by residues cysteine 43, histidine 68, and glutamate 154.

It belongs to the zinc-containing alcohol dehydrogenase family. It depends on Zn(2+) as a cofactor.

The enzyme catalyses xylitol + NAD(+) = D-xylulose + NADH + H(+). This is Putative D-xylulose reductase from Agrobacterium fabrum (strain C58 / ATCC 33970) (Agrobacterium tumefaciens (strain C58)).